Reading from the N-terminus, the 712-residue chain is Protein TAPT1 homolog (712 aa).

The span at 1–21 (MNNVPSTSRENSRNPSESSSS) shows a compositional bias: low complexity. Disordered stretches follow at residues 1-22 (MNNVPSTSRENSRNPSESSSSI) and 44-66 (ITMSAPPSPATPRKIDFSAEIET). 7 consecutive transmembrane segments (helical) span residues 196–216 (FFYLFTFLPLRFLMSIFGALL), 222–242 (TSAETCDFLKVVIIVAASMLI), 305–325 (TCGHLIVAILYATLHSFLVIL), 379–399 (HIFALLFVVMIRNMTAVNWNI), 402–422 (FTEMIPDIIMVVGCEYFVDWL), 470–490 (GFIPIPLSIMIIRVLSQTFTL), and 497–517 (IIFGIGWLLVFAVKICNGVVM). Basic and acidic residues predominate over residues 596 to 619 (EIRRSTDRETAVSHLTARSDERTP). The segment at 596 to 712 (EIRRSTDRET…MPEQGVQRIE (117 aa)) is disordered. The span at 656–667 (TENNTNSNSEQA) shows a compositional bias: polar residues. The span at 675-692 (TAAPVTSSASTNTNATSS) shows a compositional bias: low complexity.

Belongs to the TAPT1 family.

It localises to the membrane. In Caenorhabditis elegans, this protein is Protein TAPT1 homolog.